A 249-amino-acid polypeptide reads, in one-letter code: tRNA pseudouridine synthase A (249 aa).

The active-site Nucleophile is aspartate 53. Position 111 (tyrosine 111) interacts with substrate.

The protein belongs to the tRNA pseudouridine synthase TruA family. As to quaternary structure, homodimer.

The catalysed reaction is uridine(38/39/40) in tRNA = pseudouridine(38/39/40) in tRNA. In terms of biological role, formation of pseudouridine at positions 38, 39 and 40 in the anticodon stem and loop of transfer RNAs. In Streptococcus pneumoniae serotype 2 (strain D39 / NCTC 7466), this protein is tRNA pseudouridine synthase A.